The chain runs to 342 residues: Protein rough sheath 2 homolog (342 aa).

HTH myb-type domains are found at residues 1–58 (MQPP…KNYL) and 59–113 (RPGI…EKQQ). 2 consecutive DNA-binding regions (H-T-H motif) follow at residues 32 to 58 (WSLV…KNYL) and 86 to 109 (WKKI…EVFK). Residues 253–304 (RRREATEEFEAKMRALREEQAAAVERVEAEYREKMAGLRRDAEAKEQKMAEQ) are a coiled coil.

Its subcellular location is the nucleus. Transcription factor required for normal cell differentiation. May interact with other proteins to repress the knox homeobox genes. This chain is Protein rough sheath 2 homolog (RS2), found in Oryza sativa subsp. japonica (Rice).